The primary structure comprises 199 residues: GTP cyclohydrolase-2 (199 aa).

52 to 56 provides a ligand contact to GTP; that stretch reads RMHSE. Residues cysteine 57, cysteine 68, and cysteine 70 each coordinate Zn(2+). Residues glutamine 73, 94–96, and threonine 116 contribute to the GTP site; that span reads EGR. The active-site Proton acceptor is the aspartate 128. The active-site Nucleophile is the arginine 130. Residues threonine 151 and lysine 156 each contribute to the GTP site.

It belongs to the GTP cyclohydrolase II family. Requires Zn(2+) as cofactor.

The enzyme catalyses GTP + 4 H2O = 2,5-diamino-6-hydroxy-4-(5-phosphoribosylamino)-pyrimidine + formate + 2 phosphate + 3 H(+). Its pathway is cofactor biosynthesis; riboflavin biosynthesis; 5-amino-6-(D-ribitylamino)uracil from GTP: step 1/4. Functionally, catalyzes the conversion of GTP to 2,5-diamino-6-ribosylamino-4(3H)-pyrimidinone 5'-phosphate (DARP), formate and pyrophosphate. The polypeptide is GTP cyclohydrolase-2 (Aliivibrio fischeri (strain ATCC 700601 / ES114) (Vibrio fischeri)).